A 467-amino-acid chain; its full sequence is Serine/threonine-protein kinase SSN3 (467 aa).

Composition is skewed to polar residues over residues 1-12 (MSFSNLPPSSGR) and 29-39 (GSSSFTANNPS). A disordered region spans residues 1-45 (MSFSNLPPSSGRGSHADGASGRSMPPFPGSSSFTANNPSKGIHPN). Positions 79 to 408 (YLIVGFISSG…AKEALNHPYF (330 aa)) constitute a Protein kinase domain. ATP is bound by residues 85–93 (ISSGTYGRV) and lysine 109. Aspartate 211 serves as the catalytic Proton acceptor. The segment at 426–467 (YPNRRVSQDDNDIRSGSLPGTKRSGLPDDTLTSRAAKRAREM) is disordered.

This sequence belongs to the protein kinase superfamily. CMGC Ser/Thr protein kinase family. CDC2/CDKX subfamily. In terms of assembly, component of the SRB8-11 complex, a regulatory module of the Mediator complex. Requires Mg(2+) as cofactor.

Its subcellular location is the nucleus. It carries out the reaction L-seryl-[protein] + ATP = O-phospho-L-seryl-[protein] + ADP + H(+). It catalyses the reaction L-threonyl-[protein] + ATP = O-phospho-L-threonyl-[protein] + ADP + H(+). The catalysed reaction is [DNA-directed RNA polymerase] + ATP = phospho-[DNA-directed RNA polymerase] + ADP + H(+). In terms of biological role, component of the SRB8-11 complex. The SRB8-11 complex is a regulatory module of the Mediator complex which is itself involved in regulation of basal and activated RNA polymerase II-dependent transcription. The SRB8-11 complex may be involved in the transcriptional repression of a subset of genes regulated by Mediator. It may inhibit the association of the Mediator complex with RNA polymerase II to form the holoenzyme complex. The SRB8-11 complex phosphorylates the C-terminal domain (CTD) of the largest subunit of RNA polymerase II. In Coccidioides immitis (strain RS) (Valley fever fungus), this protein is Serine/threonine-protein kinase SSN3 (SSN3).